Reading from the N-terminus, the 296-residue chain is Putative peptide transport system permease protein BruAb2_1032 (296 aa).

6 helical membrane-spanning segments follow: residues 35 to 55 (IGLV…WITN), 97 to 117 (LWIG…IGIA), 131 to 151 (VMDA…SAAL), 205 to 225 (ILPN…AYAI), 229 to 249 (ATLS…GSIV), and 260 to 280 (WWIM…INLI). Residues 97–281 (LWIGLTVAVL…ISALAINLIG (185 aa)) enclose the ABC transmembrane type-1 domain.

The protein belongs to the binding-protein-dependent transport system permease family. As to quaternary structure, the complex is composed of two ATP-binding proteins (BruAb2_1033 and BruAb2_1034), two transmembrane proteins (BruAb2_1031 and BruAb2_1032) and a solute-binding protein (BruAb2_1030).

The protein localises to the cell inner membrane. In terms of biological role, probably part of an ABC transporter complex that could be involved in peptide import. Probably responsible for the translocation of the substrate across the membrane. This is Putative peptide transport system permease protein BruAb2_1032 from Brucella abortus biovar 1 (strain 9-941).